The following is a 1343-amino-acid chain: DNA-directed RNA polymerase subunit beta (1343 aa).

The protein belongs to the RNA polymerase beta chain family. The RNAP catalytic core consists of 2 alpha, 1 beta, 1 beta' and 1 omega subunit. When a sigma factor is associated with the core the holoenzyme is formed, which can initiate transcription.

The enzyme catalyses RNA(n) + a ribonucleoside 5'-triphosphate = RNA(n+1) + diphosphate. Functionally, DNA-dependent RNA polymerase catalyzes the transcription of DNA into RNA using the four ribonucleoside triphosphates as substrates. The polypeptide is DNA-directed RNA polymerase subunit beta (Shewanella violacea).